A 472-amino-acid chain; its full sequence is Probable low-salt glycan biosynthesis flippase Agl15 (472 aa).

The next 13 helical transmembrane spans lie at 8–28 (IKLF…ITFF), 38–58 (GVFF…DFGL), 77–97 (SSAI…IVVF), 109–129 (FAVY…AVSV), 164–184 (AEAL…WGLS), 209–229 (VVSS…IGIF), 244–264 (VTAI…PQVS), 289–309 (LVIP…GIVF), 315–335 (IASY…VHVI), 354–374 (VISV…FGIV), 375–395 (GAAV…AHYL), 408–428 (IGWC…FKTL), and 434–454 (LIQL…ITLL).

The protein belongs to the AglR/Agl15 family.

It is found in the cell membrane. The protein operates within protein modification; protein glycosylation. Its pathway is cell surface structure biogenesis; S-layer biogenesis. Functionally, flippase involved in N-glycan biosynthetic pathway that takes place under low-salt conditions (1.75 M instead of 3.4 M). Participates in the formation of the tetrasaccharide present at 'Asn-532' of S-layer glycoprotein Csg, consisting of a sulfated hexose, 2 hexoses and rhamnose. Probably moves the tetrasaccharide from the cytosolic to the extracytosolic side of the membrane. The sequence is that of Probable low-salt glycan biosynthesis flippase Agl15 (agl15) from Haloferax volcanii (strain ATCC 29605 / DSM 3757 / JCM 8879 / NBRC 14742 / NCIMB 2012 / VKM B-1768 / DS2) (Halobacterium volcanii).